Consider the following 330-residue polypeptide: Phenylalanine--tRNA ligase alpha subunit (330 aa).

Glu-255 provides a ligand contact to Mg(2+).

The protein belongs to the class-II aminoacyl-tRNA synthetase family. Phe-tRNA synthetase alpha subunit type 1 subfamily. As to quaternary structure, tetramer of two alpha and two beta subunits. Mg(2+) is required as a cofactor.

Its subcellular location is the cytoplasm. It catalyses the reaction tRNA(Phe) + L-phenylalanine + ATP = L-phenylalanyl-tRNA(Phe) + AMP + diphosphate + H(+). In Acinetobacter baumannii (strain AYE), this protein is Phenylalanine--tRNA ligase alpha subunit.